Reading from the N-terminus, the 180-residue chain is Large ribosomal subunit protein uL5 (180 aa).

It belongs to the universal ribosomal protein uL5 family. In terms of assembly, part of the 50S ribosomal subunit; part of the 5S rRNA/L5/L18/L25 subcomplex. Contacts the 5S rRNA and the P site tRNA. Forms a bridge to the 30S subunit in the 70S ribosome.

Its function is as follows. This is one of the proteins that bind and probably mediate the attachment of the 5S RNA into the large ribosomal subunit, where it forms part of the central protuberance. In the 70S ribosome it contacts protein S13 of the 30S subunit (bridge B1b), connecting the 2 subunits; this bridge is implicated in subunit movement. Contacts the P site tRNA; the 5S rRNA and some of its associated proteins might help stabilize positioning of ribosome-bound tRNAs. The polypeptide is Large ribosomal subunit protein uL5 (Spiroplasma kunkelii).